Consider the following 347-residue polypeptide: Protein N-terminal asparagine amidohydrolase (347 aa).

The catalysed reaction is N-terminal L-asparaginyl-[protein] + H2O + H(+) = N-terminal L-aspartyl-[protein] + NH4(+). Functionally, N-terminal asparagine deamidase that mediates deamidation of N-terminal asparagine residues to aspartate. Required for the ubiquitin-dependent turnover of intracellular proteins that initiate with Met-Asn. These proteins are acetylated on the retained initiator methionine and can subsequently be modified by the removal of N-acetyl methionine by acylaminoacid hydrolase (AAH). Conversion of the resulting N-terminal asparagine to aspartate by NTAN1 renders the protein susceptible to arginylation, polyubiquitination and degradation as specified by the N-end rule. This enzyme does not act on substrates with internal or C-terminal asparagines and does not act on glutamine residues in any position. Does not seem to be involved in immune response, unlike the N-terminal glutamine amidohydrolase NTAQ1. This Arabidopsis thaliana (Mouse-ear cress) protein is Protein N-terminal asparagine amidohydrolase.